We begin with the raw amino-acid sequence, 384 residues long: MGLVCSRNRRYRDSDPEENAQAAEIERRIESETKAEKHIQKLLLLGAGESGKSTIFKQIKLLFQTGFDEAELRSYTPVIFANVYQTIKVLHDGAKELAQNDLNSAKYVISDESKDIGEKLSEIGSRLDYPHLTKDLAKEIETLWEDAAIQETYARGNELQVPDCTKYFMENLQRLSDANYVPTKGDVLYARVRTTGVVEIQFSPVGENKRSGEVYRLFDVGGQRNERRKWIHLFEGVTAVIFCAAISEYDQTLFEDESKNRLMETKELFEWILKQPCFEKTSFMLFLNKFDIFEKKILNVPLNVCEWFKDYQPVSSGKQEIEHAYEFVKKKFEELYFQSSAPDRVDRVFKIYRTTALDQKVVKKTFKLVDETLRRRNLFEAGLL.

A disordered region spans residues 1 to 23 (MGLVCSRNRRYRDSDPEENAQAA). G2 carries the N-myristoyl glycine lipid modification. The S-palmitoyl cysteine moiety is linked to residue C5. The G-alpha domain occupies 38–384 (HIQKLLLLGA…RRNLFEAGLL (347 aa)). Residues 41-54 (KLLLLGAGESGKST) are G1 motif. E49, S50, G51, K52, S53, T54, D163, L188, Y189, T194, G222, N288, K289, D291, and A356 together coordinate GTP. Mg(2+) is bound at residue S53. A G2 motif region spans residues 186-194 (DVLYARVRT). T194 provides a ligand contact to Mg(2+). The segment at 215-224 (YRLFDVGGQR) is G3 motif. Positions 284-291 (MLFLNKFD) are G4 motif. Residues 354–359 (TTALDQ) are G5 motif.

This sequence belongs to the G-alpha family. As to quaternary structure, g proteins are composed of 3 units; alpha, beta and gamma. The alpha chain contains the guanine nucleotide binding site. Requires Mg(2+) as cofactor.

Guanine nucleotide-binding proteins (G proteins) are involved as modulators or transducers in various transmembrane signaling systems. In Pisum sativum (Garden pea), this protein is Guanine nucleotide-binding protein alpha-2 subunit (GPA2).